Consider the following 364-residue polypeptide: Growth hormone secretagogue receptor type 1 (364 aa).

The Extracellular segment spans residues 1-40 (MWNATPSEEPEPNVTLDLDWDASPGNDSLSDELLPLFPAP). Asn-13 and Asn-26 each carry an N-linked (GlcNAc...) asparagine glycan. The helical transmembrane segment at 41-66 (LLAGVTATCVALFVVGISGNLLTMLV) threads the bilayer. Over 67 to 72 (VSRFRE) the chain is Cytoplasmic. A helical membrane pass occupies residues 73-96 (LRTTTNLYLSSMAFSDLLIFLCMP). Over 97–117 (LDLVRLWQYRPWNFGDLLCKL) the chain is Extracellular. A disulfide bond links Cys-115 and Cys-197. The helical transmembrane segment at 118-139 (FQFVSESCTYATVLTITALSVE) threads the bilayer. Residues 140–162 (RYFAICFPLRAKVVVTKGRVKLV) lie on the Cytoplasmic side of the membrane. The chain crosses the membrane as a helical span at residues 163-183 (ILVIWAVAFCSAGPIFVLVGV). Residues 184–211 (EHENGTDPRDTNECRATEFAVRSGLLTV) are Extracellular-facing. Asn-187 carries N-linked (GlcNAc...) asparagine glycosylation. A helical membrane pass occupies residues 212–235 (MVWVSSVFFFLPVFCLTVLYSLIG). Over 236-263 (RKLWRRRGDAAVGSSLRDQNHKQTVKML) the chain is Cytoplasmic. A helical transmembrane segment spans residues 264-285 (AVVVFAFILCWLPFHVGRYLFS). The Extracellular segment spans residues 286–302 (KSFEPGSLEIAQISQYC). The chain crosses the membrane as a helical span at residues 303 to 326 (NLVSFVLFYLSAAINPILYNIMSK). At 327-364 (KYRVAVFKLLGFESFSQRKLSTLKDESSRAWTKSSINT) the chain is on the cytoplasmic side.

This sequence belongs to the G-protein coupled receptor 1 family.

The protein resides in the cell membrane. Functionally, receptor for ghrelin, coupled to G-alpha-11 proteins. Stimulates growth hormone secretion. Also binds other growth hormone releasing peptides (GHRP) (e.g. Met-enkephalin and GHRP-6) as well as non-peptide, low molecular weight secretagogues (e.g. L-692,429, MK-0677, adenosine). The protein is Growth hormone secretagogue receptor type 1 (Ghsr) of Mus musculus (Mouse).